A 243-amino-acid polypeptide reads, in one-letter code: Interleukin-27 subunit alpha (243 aa).

Positions 1 to 28 (MGQTAGDLGWRLSLLLLPLLLVQAGVWG) are cleaved as a signal peptide.

Belongs to the IL-6 superfamily. Heterodimer with EBI3; not disulfide-linked. This heterodimer is known as interleukin IL-27. Post-translationally, O-glycosylated. In terms of tissue distribution, expressed in monocytes and in placenta.

Its subcellular location is the secreted. Associates with EBI3 to form the IL-27 interleukin, a heterodimeric cytokine which functions in innate immunity. IL-27 has pro- and anti-inflammatory properties, that can regulate T-helper cell development, suppress T-cell proliferation, stimulate cytotoxic T-cell activity, induce isotype switching in B-cells, and that has diverse effects on innate immune cells. Among its target cells are CD4 T-helper cells which can differentiate in type 1 effector cells (TH1), type 2 effector cells (TH2) and IL17 producing helper T-cells (TH17). It drives rapid clonal expansion of naive but not memory CD4 T-cells. It also strongly synergizes with IL-12 to trigger interferon-gamma/IFN-gamma production of naive CD4 T-cells, binds to the cytokine receptor WSX-1/TCCR which appears to be required but not sufficient for IL-27-mediated signal transduction. IL-27 potentiate the early phase of TH1 response and suppress TH2 and TH17 differentiation. It induces the differentiation of TH1 cells via two distinct pathways, p38 MAPK/TBX21- and ICAM1/ITGAL/ERK-dependent pathways. It also induces STAT1, STAT3, STAT4 and STAT5 phosphorylation and activates TBX21/T-Bet via STAT1 with resulting IL12RB2 up-regulation, an event crucial to TH1 cell commitment. It suppresses the expression of GATA3, the inhibitor TH1 cells development. In CD8 T-cells, it activates STATs as well as GZMB. IL-27 reveals to be a potent inhibitor of TH17 cell development and of IL-17 production. Indeed IL27 alone is also able to inhibit the production of IL17 by CD4 and CD8 T-cells. While IL-27 suppressed the development of pro-inflammatory Th17 cells via STAT1, it inhibits the development of anti-inflammatory inducible regulatory T-cells, iTreg, independently of STAT1. IL-27 also has an effect on cytokine production, it suppresses pro-inflammatory cytokine production such as IL2, IL4, IL5 and IL6 and activates suppressors of cytokine signaling such as SOCS1 and SOCS3. Apart from suppression of cytokine production, IL-27 also antagonizes the effects of some cytokines such as IL6 through direct effects on T-cells. Another important role of IL-27 is its antitumor activity as well as its antiangiogenic activity with activation of production of antiangiogenic chemokines such as IP-10/CXCL10 and MIG/CXCL9. In vein endothelial cells, it induces IRF1/interferon regulatory factor 1 and increase the expression of MHC class II transactivator/CIITA with resulting up-regulation of major histocompatibility complex class II. IL-27 also demonstrates antiviral activity with inhibitory properties on HIV-1 replication. The sequence is that of Interleukin-27 subunit alpha (IL27) from Homo sapiens (Human).